Consider the following 817-residue polypeptide: Myosin-A (817 aa).

At S19 the chain carries Phosphoserine. In terms of domain architecture, Myosin motor spans 97–771; it reads MSFGDIGLLN…GAKMLSKIQR (675 aa). Position 191 to 198 (191 to 198) interacts with ATP; it reads GESGAGKT. The interval 661–671 is actin-binding; that stretch reads PHFIRCIKPNE. Residues 773 to 817 form a tail region; the sequence is KLVEWENCVSVIEAAIMKYKHKQNVENNVSSLMRVQAHIRKRMVA.

This sequence belongs to the TRAFAC class myosin-kinesin ATPase superfamily. Myosin family. In terms of assembly, interacts with ACT1.

It is found in the cell membrane. Myosins are actin-based motor molecules with ATPase activity. Unconventional myosins serve in intracellular movements. Their highly divergent tails are presumed to bind to membranous compartments, which would be moved relative to actin filaments. The sequence is that of Myosin-A from Plasmodium yoelii yoelii.